We begin with the raw amino-acid sequence, 541 residues long: Chaperonin GroEL 2 (541 aa).

ATP-binding positions include 29–32 (TLGP), 86–90 (DGTTT), G413, 476–478 (NAA), and D492.

The protein belongs to the chaperonin (HSP60) family. Forms a cylinder of 14 subunits composed of two heptameric rings stacked back-to-back. Interacts with the co-chaperonin GroES.

The protein localises to the secreted. The protein resides in the capsule. Its subcellular location is the cell surface. It is found in the cell wall. The catalysed reaction is ATP + H2O + a folded polypeptide = ADP + phosphate + an unfolded polypeptide.. Functionally, together with its co-chaperonin GroES, plays an essential role in assisting protein folding. The GroEL-GroES system forms a nano-cage that allows encapsulation of the non-native substrate proteins and provides a physical environment optimized to promote and accelerate protein folding. The protein is Chaperonin GroEL 2 of Mycobacterium sp. (strain KMS).